Reading from the N-terminus, the 324-residue chain is Acetyl-coenzyme A carboxylase carboxyl transferase subunit alpha (324 aa).

In terms of domain architecture, CoA carboxyltransferase C-terminal spans 37 to 291 (KLDKRLDRLK…QEYVLQEWLK (255 aa)).

This sequence belongs to the AccA family. In terms of assembly, acetyl-CoA carboxylase is a heterohexamer composed of biotin carboxyl carrier protein (AccB), biotin carboxylase (AccC) and two subunits each of ACCase subunit alpha (AccA) and ACCase subunit beta (AccD).

It localises to the cytoplasm. The catalysed reaction is N(6)-carboxybiotinyl-L-lysyl-[protein] + acetyl-CoA = N(6)-biotinyl-L-lysyl-[protein] + malonyl-CoA. Its pathway is lipid metabolism; malonyl-CoA biosynthesis; malonyl-CoA from acetyl-CoA: step 1/1. Its function is as follows. Component of the acetyl coenzyme A carboxylase (ACC) complex. First, biotin carboxylase catalyzes the carboxylation of biotin on its carrier protein (BCCP) and then the CO(2) group is transferred by the carboxyltransferase to acetyl-CoA to form malonyl-CoA. The polypeptide is Acetyl-coenzyme A carboxylase carboxyl transferase subunit alpha (Chlamydia trachomatis serovar D (strain ATCC VR-885 / DSM 19411 / UW-3/Cx)).